We begin with the raw amino-acid sequence, 264 residues long: Glutamate racemase (264 aa).

Substrate contacts are provided by residues 10 to 11 (DS) and 42 to 43 (YG). Cysteine 73 (proton donor/acceptor) is an active-site residue. Substrate is bound at residue 74–75 (NT). Residue cysteine 183 is the Proton donor/acceptor of the active site. Residue 184 to 185 (TH) participates in substrate binding.

Belongs to the aspartate/glutamate racemases family.

It catalyses the reaction L-glutamate = D-glutamate. It functions in the pathway cell wall biogenesis; peptidoglycan biosynthesis. Its function is as follows. Provides the (R)-glutamate required for cell wall biosynthesis. This Streptococcus pyogenes serotype M49 (strain NZ131) protein is Glutamate racemase.